Reading from the N-terminus, the 626-residue chain is MHLVSSLLVVGAAFQAVLGLPDPLHEKRHSDIIKRSVDSYIQTETPIAQKNLLCNIGASGCRASGAASGVVVASPSKSSPDYWYTWTRDAALVTKLIVDEFTNDYNTTLQNTIQAYAAAQAKLQGVSNPSGSLSNGAGLGEPKFMVDLQQFTGAWGRPQRDGPPLRAIALIGYGKWLVSNGYADTAKSIIWPIVKNDLAYTAQYWNNTGFDLWEEVNSSSFFTIAASHRALVEGSAFAKSVGSSCSACDAIAPQILCFQQSFWSNSGYIISNFVNYRSGKDINSVLTSIHNFDPAAGCDVNTFQPCSDRALANHKVVVDSMRFWGVNSGRTAGKAAAVGRYAEDVYYNGNPWYLATLAAAEQLYDAVYVWKKQGSITVTSTSLAFFKDLVPSVSTGTYSSSSSTYTAIINAVTTYADGFVDIVAQYTPSDGSLAEQFDKDSGAPLSATHLTWSYASFLSAAARRAGIVPPSWGAASANSLPGSCSASTVAGSYATATATSFPANLTPASTTVTPPTQTGCAADHEVLVTFNEKVTTSYGQTVKVVGSIAALGNWAPASGVTLSAKQYSSSNPLWSTTIALPQGTSFKYKYVVVNSDGSVKWENDPDRSYAVGTDCASTATLDDTWR.

Residues 1–19 form the signal peptide; it reads MHLVSSLLVVGAAFQAVLG. A propeptide spanning residues 20-35 is cleaved from the precursor; sequence LPDPLHEKRHSDIIKR. N-linked (GlcNAc...) asparagine glycosylation occurs at Asn106. Trp155 contributes to the substrate binding site. N-linked (GlcNAc...) asparagine glycosylation occurs at Asn206. The active-site Proton acceptor is Asp211. Catalysis depends on Glu214, which acts as the Proton donor. Residue Asn217 is glycosylated (N-linked (GlcNAc...) asparagine). Residues 520-626 enclose the CBM20 domain; it reads CAADHEVLVT…STATLDDTWR (107 aa).

The protein belongs to the glycosyl hydrolase 15 family.

It catalyses the reaction Hydrolysis of terminal (1-&gt;4)-linked alpha-D-glucose residues successively from non-reducing ends of the chains with release of beta-D-glucose.. The sequence is that of Glucoamylase (gla-1) from Neurospora crassa (strain ATCC 24698 / 74-OR23-1A / CBS 708.71 / DSM 1257 / FGSC 987).